The primary structure comprises 83 residues: uncharacterized protein (83 aa).

The segment at 15-36 (RLKNGRGNKTMSESDYNTSDSG) is disordered. Residues 21–35 (GNKTMSESDYNTSDS) show a composition bias toward polar residues.

This is an uncharacterized protein from Aedes vexans (Inland floodwater mosquito).